Reading from the N-terminus, the 214-residue chain is Octanoyltransferase (214 aa).

Residues 32–207 (EDTLDEIWLV…NLLALLNHPP (176 aa)) enclose the BPL/LPL catalytic domain. Residues 71–78 (RGGQVTYH), 138–140 (SLG), and 151–153 (GLA) contribute to the substrate site. Cys-169 (acyl-thioester intermediate) is an active-site residue.

Belongs to the LipB family.

The protein resides in the cytoplasm. It carries out the reaction octanoyl-[ACP] + L-lysyl-[protein] = N(6)-octanoyl-L-lysyl-[protein] + holo-[ACP] + H(+). It functions in the pathway protein modification; protein lipoylation via endogenous pathway; protein N(6)-(lipoyl)lysine from octanoyl-[acyl-carrier-protein]: step 1/2. Its function is as follows. Catalyzes the transfer of endogenously produced octanoic acid from octanoyl-acyl-carrier-protein onto the lipoyl domains of lipoate-dependent enzymes. Lipoyl-ACP can also act as a substrate although octanoyl-ACP is likely to be the physiological substrate. The sequence is that of Octanoyltransferase from Klebsiella pneumoniae subsp. pneumoniae (strain ATCC 700721 / MGH 78578).